The following is a 350-amino-acid chain: Phenylalanine--tRNA ligase alpha subunit (350 aa).

Position 257 (glutamate 257) interacts with Mg(2+).

The protein belongs to the class-II aminoacyl-tRNA synthetase family. Phe-tRNA synthetase alpha subunit type 1 subfamily. As to quaternary structure, tetramer of two alpha and two beta subunits. The cofactor is Mg(2+).

It localises to the cytoplasm. The catalysed reaction is tRNA(Phe) + L-phenylalanine + ATP = L-phenylalanyl-tRNA(Phe) + AMP + diphosphate + H(+). The sequence is that of Phenylalanine--tRNA ligase alpha subunit from Listeria monocytogenes serovar 1/2a (strain ATCC BAA-679 / EGD-e).